We begin with the raw amino-acid sequence, 495 residues long: Cardiolipin synthase A (495 aa).

The next 2 membrane-spanning stretches (helical) occupy residues 9–29 and 46–66; these read IEVL…WLIT and MAWL…YLLL. PLD phosphodiesterase domains follow at residues 227–254 and 408–435; these read MDLR…IDPK and EGGL…DMRS. Active-site residues include histidine 232, lysine 234, aspartate 239, histidine 413, lysine 415, and aspartate 420.

The protein belongs to the phospholipase D family. Cardiolipin synthase subfamily. ClsA sub-subfamily.

It is found in the cell membrane. It carries out the reaction 2 a 1,2-diacyl-sn-glycero-3-phospho-(1'-sn-glycerol) = a cardiolipin + glycerol. Catalyzes the reversible phosphatidyl group transfer from one phosphatidylglycerol molecule to another to form cardiolipin (CL) (diphosphatidylglycerol) and glycerol. This Wigglesworthia glossinidia brevipalpis protein is Cardiolipin synthase A.